A 61-amino-acid chain; its full sequence is Small ribosomal subunit protein uS14 (61 aa).

Zn(2+) contacts are provided by cysteine 24, cysteine 27, cysteine 40, and cysteine 43.

The protein belongs to the universal ribosomal protein uS14 family. Zinc-binding uS14 subfamily. As to quaternary structure, part of the 30S ribosomal subunit. Contacts proteins S3 and S10. Zn(2+) is required as a cofactor.

In terms of biological role, binds 16S rRNA, required for the assembly of 30S particles and may also be responsible for determining the conformation of the 16S rRNA at the A site. The sequence is that of Small ribosomal subunit protein uS14 from Geotalea daltonii (strain DSM 22248 / JCM 15807 / FRC-32) (Geobacter daltonii).